Reading from the N-terminus, the 1562-residue chain is E3 ubiquitin-protein ligase listerin (1562 aa).

HEAT repeat units lie at residues serine 41–glutamine 78, lysine 127–alanine 164, glutamate 175–leucine 217, glutamate 262–lysine 301, leucine 304–threonine 348, serine 495–serine 532, serine 555–serine 592, isoleucine 813–cysteine 850, tyrosine 908–arginine 945, phenylalanine 997–serine 1037, threonine 1047–serine 1085, isoleucine 1188–aspartate 1226, asparagine 1263–glycine 1298, and leucine 1299–proline 1339. Residues cysteine 1508–arginine 1555 form an RING-type zinc finger.

Belongs to the LTN1 family. In terms of assembly, component of the ribosome quality control complex (RQC), composed of the E3 ubiquitin ligase RKR1/LTN1, RQC1 and RQC2, as well as CDC48 and its ubiquitin-binding cofactors associated with the 60S ribosomal subunits.

The protein localises to the nucleus. It localises to the cytoplasm. The protein resides in the cytosol. It catalyses the reaction S-ubiquitinyl-[E2 ubiquitin-conjugating enzyme]-L-cysteine + [acceptor protein]-L-lysine = [E2 ubiquitin-conjugating enzyme]-L-cysteine + N(6)-ubiquitinyl-[acceptor protein]-L-lysine.. Its pathway is protein modification; protein ubiquitination. In terms of biological role, E3 ubiquitin-protein ligase component of the ribosome quality control complex (RQC), a ribosome-associated complex that mediates ubiquitination and extraction of incompletely synthesized nascent chains for proteasomal degradation. Mediates ubiquitination of proteins derived from mRNAs lacking stop codons (non-stop proteins) and other translation arrest products induced by poly-lysine sequences and tandem rare codons. Ubiquitination leads to CDC48 recruitment for extraction and degradation of the incomplete translation product. May indirectly play a role in chromatin function and transcription. The protein is E3 ubiquitin-protein ligase listerin of Saccharomyces cerevisiae (strain ATCC 204508 / S288c) (Baker's yeast).